The chain runs to 256 residues: Hydroxyacylglutathione hydrolase (256 aa).

Residues His-55, His-57, Asp-59, His-60, His-113, Asp-130, and His-168 each contribute to the Zn(2+) site.

The protein belongs to the metallo-beta-lactamase superfamily. Glyoxalase II family. Monomer. The cofactor is Zn(2+).

It catalyses the reaction an S-(2-hydroxyacyl)glutathione + H2O = a 2-hydroxy carboxylate + glutathione + H(+). It functions in the pathway secondary metabolite metabolism; methylglyoxal degradation; (R)-lactate from methylglyoxal: step 2/2. Thiolesterase that catalyzes the hydrolysis of S-D-lactoyl-glutathione to form glutathione and D-lactic acid. The polypeptide is Hydroxyacylglutathione hydrolase (Psychromonas ingrahamii (strain DSM 17664 / CCUG 51855 / 37)).